We begin with the raw amino-acid sequence, 823 residues long: Hypoxia-inducible factor 1-alpha (823 aa).

Residues 1–30 (MEGAGGANDKKKISSERRKEKSRDAARSRR) are disordered. The segment at 1–401 (MEGAGGANDK…KEPDALTLLA (401 aa)) is interaction with TSGA10. Basic and acidic residues predominate over residues 8–30 (NDKKKISSERRKEKSRDAARSRR). One can recognise a bHLH domain in the interval 17–70 (RRKEKSRDAARSRRSKESEVFYELAHQLPLPHNVSSHLDKASVMRLTISYLRVR). The interval 21–30 (KSRDAARSRR) is DNA-binding. One can recognise a PAS 1 domain in the interval 85–158 (KAQMNCFYLK…THRNGLVKKG (74 aa)). The interval 170-191 (RMKCTLTSRGRTMNIKSATWKV) is required for heterodimer formation with ARNT. One can recognise a PAS 2 domain in the interval 228 to 298 (PHPSNIEIPL…KTHHDMFTKG (71 aa)). Residue Ser247 is modified to Phosphoserine; by CK1. Residues 302 to 345 (TGQYRMLAKRGGYVWIETQATVIYNTKNSQPQCIVCVNYVVSGI) form the PAC domain. Residues 401-600 (APAAGDTIIS…QSASTNTVFQ (200 aa)) are ODD. The residue at position 402 (Pro402) is a 4-hydroxyproline. A compositionally biased stretch (polar residues) spans 494 to 517 (IQDQPASPSDGSTRQSSPEPNSPS). The tract at residues 494–521 (IQDQPASPSDGSTRQSSPEPNSPSEYCF) is disordered. Positions 531–575 (FKLELVEKLFAEDTEAKNPFSTQDTDLDLEMLAPYIPMDDDFQLR) are NTAD. Lys532 is modified (N6-acetyllysine; alternate). Lys532 participates in a covalent cross-link: Glycyl lysine isopeptide (Lys-Gly) (interchain with G-Cter in ubiquitin); alternate. Glycyl lysine isopeptide (Lys-Gly) (interchain with G-Cter in ubiquitin) cross-links involve residues Lys538 and Lys547. Ser551 carries the post-translational modification Phosphoserine; by GSK3-beta. At Thr555 the chain carries Phosphothreonine; by GSK3-beta. Pro564 is modified (4-hydroxyproline). Residue Ser576 is modified to Phosphoserine; by PLK3. The ID stretch occupies residues 576–782 (SFDQLSPLEN…SDLACRLLGQ (207 aa)). 2 disordered regions span residues 581–602 (SPLE…FQPT) and 639–685 (PSPP…PRSP). The residue at position 589 (Ser589) is a Phosphoserine; by GSK3-beta. Polar residues predominate over residues 651–666 (ATTSPYSDTGSRTASP). The residue at position 654 (Ser654) is a Phosphoserine; by PLK3. An N6-acetyllysine modification is found at Lys706. The Nuclear localization signal signature appears at 715-721 (RKRKIEH). The tract at residues 783–823 (SMDESGLPQLTSYDCEVNAPIQGSRNLLQGEELLRALDQVN) is CTAD. The residue at position 797 (Cys797) is an S-nitrosocysteine. Asn800 carries the post-translational modification (3S)-3-hydroxyasparagine.

In terms of assembly, interacts with the ARNT; forms a heterodimer that binds core DNA sequence 5'-TACGTG-3' within the hypoxia response element (HRE) of target gene promoters. Interacts with COPS5; the interaction increases the transcriptional activity of HIF1A through increased stability. Interacts with EP300 (via TAZ-type 1 domains); the interaction is stimulated in response to hypoxia and inhibited by CITED2. Interacts with CREBBP (via TAZ-type 1 domains). Interacts with NCOA1, NCOA2, APEX1 and HSP90. Interacts (hydroxylated within the ODD domain) with VHLL (via beta domain); the interaction, leads to polyubiquitination and subsequent HIF1A proteasomal degradation. During hypoxia, sumoylated HIF1A also binds VHL; the interaction promotes the ubiquitination of HIF1A. Interacts with SENP1; the interaction desumoylates HIF1A resulting in stabilization and activation of transcription. Interacts (via the ODD domain) with NAA10; the interaction appears not to acetylate HIF1A nor have any affect on protein stability, during hypoxia. Interacts with RWDD3; the interaction enhances HIF1A sumoylation. Interacts with TSGA10. Interacts with HIF3A. Interacts with RORA (via the DNA binding domain); the interaction enhances HIF1A transcription under hypoxia through increasing protein stability. Interaction with PSMA7 inhibits the transactivation activity of HIF1A under both normoxic and hypoxia-mimicking conditions. Interacts with USP20. Interacts with RACK1; promotes HIF1A ubiquitination and proteasome-mediated degradation. Interacts (via N-terminus) with USP19. Interacts with SIRT2. Interacts (deacetylated form) with EGLN1. Interacts with CBFA2T3. Interacts with HSP90AA1 and HSP90AB1. Interacts with DCUN1D1; this interaction increases the interaction between VHL and DCUN1D1. Interacts with HIF1AN. In terms of processing, S-nitrosylation of Cys-797 may be responsible for increased recruitment of p300 coactivator necessary for transcriptional activity of HIF-1 complex. Post-translationally, acetylation of Lys-532 by ARD1 increases interaction with VHL and stimulates subsequent proteasomal degradation. Deacetylation of Lys-706 by SIRT2 increases its interaction with and hydroxylation by EGLN1 thereby inactivating HIF1A activity by inducing its proteasomal degradation. Ubiquitinated; in normoxia, following hydroxylation and interaction with VHL. Lys-532 appears to be the principal site of ubiquitination. Clioquinol, the Cu/Zn-chelator, inhibits ubiquitination through preventing hydroxylation at Asn-800. Ubiquitinated by E3 ligase VHL. Deubiquitinated by UCHL1. In terms of processing, requires phosphorylation for DNA-binding. Phosphorylation at Ser-247 by CSNK1D/CK1 represses kinase activity and impairs ARNT binding. Phosphorylation by GSK3-beta and PLK3 promote degradation by the proteasome. Post-translationally, the iron and 2-oxoglutarate dependent 3-hydroxylation of asparagine is (S) stereospecific within HIF CTAD domains. Sumoylated; with SUMO1 under hypoxia. Sumoylation is enhanced through interaction with RWDD3. Both sumoylation and desumoylation seem to be involved in the regulation of its stability during hypoxia. Sumoylation can promote either its stabilization or its VHL-dependent degradation by promoting hydroxyproline-independent HIF1A-VHL complex binding, thus leading to HIF1A ubiquitination and proteasomal degradation. Desumoylation by SENP1 increases its stability amd transcriptional activity. There is a disaccord between various publications on the effect of sumoylation and desumoylation on its stability and transcriptional activity. In terms of processing, in normoxia, is hydroxylated on Pro-402 and Pro-564 in the oxygen-dependent degradation domain (ODD) by EGLN1/PHD2 and EGLN2/PHD1. EGLN3/PHD3 has also been shown to hydroxylate Pro-564. The hydroxylated prolines promote interaction with VHL, initiating rapid ubiquitination and subsequent proteasomal degradation. Deubiquitinated by USP20. Under hypoxia, proline hydroxylation is impaired and ubiquitination is attenuated, resulting in stabilization. In normoxia, is hydroxylated on Asn-800 by HIF1AN, thus abrogating interaction with CREBBP and EP300 and preventing transcriptional activation. Repressed by iron ion, via Fe(2+) prolyl hydroxylase (PHD) enzymes-mediated hydroxylation and subsequent proteasomal degradation.

The protein localises to the cytoplasm. It localises to the nucleus. Induced by reactive oxygen species (ROS). Its function is as follows. Functions as a master transcriptional regulator of the adaptive response to hypoxia. Under hypoxic conditions, activates the transcription of over 40 genes, including erythropoietin, glucose transporters, glycolytic enzymes, vascular endothelial growth factor, HILPDA, and other genes whose protein products increase oxygen delivery or facilitate metabolic adaptation to hypoxia. Plays an essential role in embryonic vascularization, tumor angiogenesis and pathophysiology of ischemic disease. Heterodimerizes with ARNT; heterodimer binds to core DNA sequence 5'-TACGTG-3' within the hypoxia response element (HRE) of target gene promoters. Activation requires recruitment of transcriptional coactivators such as CREBBP and EP300. Activity is enhanced by interaction with NCOA1 and/or NCOA2. Interaction with redox regulatory protein APEX1 seems to activate CTAD and potentiates activation by NCOA1 and CREBBP. Involved in the axonal distribution and transport of mitochondria in neurons during hypoxia. This chain is Hypoxia-inducible factor 1-alpha (HIF1A), found in Bos taurus (Bovine).